The chain runs to 226 residues: Apoptosis regulator OPG045 (226 aa).

Belongs to the orthopoxvirus OPG045 family. As to quaternary structure, homodimer. Interacts with host pro-apoptotic protein BCL2L11 (via BH3 domain). Interacts with host NLRP1. Interacts with host BAK.

Its subcellular location is the host mitochondrion outer membrane. The protein resides in the host cytoplasm. Its function is as follows. Plays a role in evading host innate immune response by inhibiting host inflammasome activation. Interacts with and inhibits NLR-mediated interleukin-1 beta/IL1B production in infected cells. At the host mitochondria outer membrane, interacts with the BH3 domain of host BAK and prevents BAK from binding active BAX. In turn, host apoptosis is inhibited. This chain is Apoptosis regulator OPG045 (OPG045), found in Vaccinia virus (strain Copenhagen) (VACV).